Reading from the N-terminus, the 462-residue chain is C4-dicarboxylate transport transcriptional regulatory protein DctD (462 aa).

One can recognise a Response regulatory domain in the interval 12 to 126; sequence QVLLIDDDPH…ALLDSVRRAL (115 aa). D61 bears the 4-aspartylphosphate mark. The Sigma-54 factor interaction domain maps to 152 to 381; it reads LIGRSAGMQR…LQNAAERFAL (230 aa). ATP contacts are provided by residues 180–187 and 243–252; these read GETGAGKE and ANGGTLFLDE.

In terms of processing, phosphorylated by DctB.

Functionally, member of the two-component regulatory system DctB/DctD, which regulates C4-dicarboxylate transport via regulation of expression of the dctPQM operon and dctA. This chain is C4-dicarboxylate transport transcriptional regulatory protein DctD, found in Pseudomonas aeruginosa (strain ATCC 15692 / DSM 22644 / CIP 104116 / JCM 14847 / LMG 12228 / 1C / PRS 101 / PAO1).